The primary structure comprises 345 residues: Methylthioribose-1-phosphate isomerase 2 (345 aa).

Residues 47–49, Arg-88, and Gln-194 each bind substrate; that span reads RGA. Asp-235 functions as the Proton donor in the catalytic mechanism. 245-246 serves as a coordination point for substrate; sequence NK.

This sequence belongs to the eIF-2B alpha/beta/delta subunits family. MtnA subfamily.

It catalyses the reaction 5-(methylsulfanyl)-alpha-D-ribose 1-phosphate = 5-(methylsulfanyl)-D-ribulose 1-phosphate. It participates in amino-acid biosynthesis; L-methionine biosynthesis via salvage pathway; L-methionine from S-methyl-5-thio-alpha-D-ribose 1-phosphate: step 1/6. Catalyzes the interconversion of methylthioribose-1-phosphate (MTR-1-P) into methylthioribulose-1-phosphate (MTRu-1-P). The chain is Methylthioribose-1-phosphate isomerase 2 from Pseudothermotoga lettingae (strain ATCC BAA-301 / DSM 14385 / NBRC 107922 / TMO) (Thermotoga lettingae).